Here is a 593-residue protein sequence, read N- to C-terminus: Ribonuclease Y (593 aa).

Residues 6–26 (ILLMYLIVGLLTALTVLIFVF) form a helical membrane-spanning segment. Positions 218-278 (DPIKVKKVTD…IKLEVAYNAL (61 aa)) constitute a KH domain. The 111-residue stretch at 354 to 464 (VLTHSIEAAQ…TKIADFLSAA (111 aa)) folds into the HD domain.

The protein belongs to the RNase Y family.

The protein resides in the cell membrane. In terms of biological role, endoribonuclease that initiates mRNA decay. This is Ribonuclease Y from Mycoplasmoides gallisepticum (strain R(low / passage 15 / clone 2)) (Mycoplasma gallisepticum).